The chain runs to 83 residues: MYB-like transcription factor ETC1 (83 aa).

Positions 35 to 72 (AQEEEDLICRMYKLVGERWDLIAGRIPGRTAEEIERFW) constitute a Myb-like domain.

Expressed in developing trichomes and non-root hair cells.

It is found in the nucleus. Its function is as follows. MYB-type transcription factor involved in epidermal cell fate specification. Acts as a negative regulator of trichome development, by mediating lateral inhibition. Promotes the formation of hair developing cells in H position in root epidermis, probably by inhibiting non-hair cell formation. In Arabidopsis thaliana (Mouse-ear cress), this protein is MYB-like transcription factor ETC1 (ETC1).